Reading from the N-terminus, the 13477-residue chain is Mucin-3B (13477 aa).

The first 21 residues, 1–21, serve as a signal peptide directing secretion; the sequence is MQLLGLLSILWMLKSSPGATG. Residues 219–234 are compositionally biased toward low complexity; it reads TISSTTRTTERTPLPT. 106 disordered regions span residues 219–243, 327–347, 360–383, 513–559, 622–643, 815–839, 923–968, 1154–1179, 1480–1511, 1529–1601, 1619–1638, 1692–1714, 1944–1968, 2064–2123, 2170–2197, 2275–2308, 2442–2462, 2476–2497, 2509–2537, 2591–2610, 2672–2717, 2812–2832, 2845–2867, 2922–2947, 3074–3109, 3309–3395, 3420–3481, 3545–3565, 3654–3727, 3740–3812, 4014–4047, 4067–4106, 4182–4249, 4269–4313, 4510–4530, 4557–4617, 4630–4651, 4802–4830, 4953–4986, 5128–5203, 5455–5486, 5627–5680, 5834–5908, 5957–5977, 5990–6017, 6030–6080, 6120–6150, 6172–6197, 6456–6481, 6541–6598, 6846–6867, 6946–6971, 6999–7021, 7067–7093, 7170–7206, 7225–7244, 7299–7329, 7400–7433, 7476–7532, 7578–7600, 7731–7766, 7922–7996, 8036–8066, 8088–8113, 8372–8397, 8457–8514, 8762–8783, 8862–8887, 8915–8941, 8983–9009, 9052–9122, 9141–9160, 9215–9240, 9335–9366, 9409–9465, 9566–9589, 9612–9674, 9734–9760, 9828–9859, 9883–9908, 9921–9973, 10076–10099, 10120–10166, 10189–10285, 10389–10425, 10462–10481, 10501–10537, 10640–10660, 10750–10828, 10887–11032, 11044–11065, 11276–11317, 11446–11482, 11566–11697, 11754–11779, 11818–11949, 12067–12103, 12186–12220, 12280–12323, 12364–12452, 12468–12578, 12616–12639, 12681–12700, 12785–12805, 12985–13011, and 13052–13086; these read TISSTTRTTERTPLPTGSIHTTMSP, TRSTPTSETTYPASPTSTVTD, GTLSPTTTLPPTSSSQQTTETPMT, SMTT…PSTL, ATTPTTNLGNTTTETTSHSTPS, TTTNSFTTSANMEPPSTAVATTGTG, TSQT…STTE, PSMSASNDRTTHTESISSPPASTSTL, SPTVQNTETSSFVSMTSATTPSERPTFTSTEN, SISA…FPET, MTSTPPITSSVTPTNTVTSM, TTSTPTSETTYSTSPTSTVTDSM, TTSATMEPPSSSVAATDTGQTTFTS, TPNA…IAKS, STSMTPSTVSTSIPTSQPKTVNSSSGGI, SSSMSESSAGTTHTESISSPPATTSTLHTTAEST, RSTPTSETTYPTSPTSTVKGS, LSMETSLPPTSSSLPTTETATT, SHSTPSFSSSTIHSTVSTPTTVISSGPPT, SAMSTSDIPSSPSIQNTETS, TSTL…FSSS, TTITRSTPTSETTYPISSTST, TMTETSSSATSLPLTSPLVSTTE, SRIPSSLSTDIPTSQPTTITPSSVGI, ETPSSTVATTGTGQTTFTSSTATSPETNTLTPTPDI, TTSH…NSNS, ITTT…SHST, STTSFTSSTATTETTSRSTPS, SITT…STTA, ITTI…TTAE, TETTSRSTPSYTSAITTTETTSHRTPSFTSSIAT, TSNSTASLTSSMTTTETTSHSTPSLTSSMTATETTSHSTP, TTET…SSIT, NSTS…PSFT, SHSTPSFNSSITTTETLSHST, TETT…STSS, YSPSSFTSSITTTESPSHSTPS, TSSFTSSITSTETTSHSTPSLTSSITATG, HSLPSFTSSSTTTETPSHSPPGFSSSIATSKTIS, YTSS…ITTT, ITNTESTSRSTPSFTFSTTSTETTSHSTPSFT, TTKT…ATSK, TTSY…HSPP, STPSFTSSITTTETTSQSSPS, HSTASFTSSITTTETTSHSTRSITSSIT, TSSI…PPIF, TTETNSHSPPSFTSSIATTETPSHSPPSFTS, TESTSHSTPSFTSSIATTETTSHTPP, TETPSHSTPSFPSSITTTQSASHSTP, TKTT…TSTS, TTGTSSHNTLGLSSSVDTTKTT, ITTTETTSHSTPSITSSVTTAERTSH, TTESTSHSNPSLTSAITTTETRS, TTETTSHSPPSFTSSISITETPSHSPP, TETASHSNPSSTSSITTTESTSHSPPRSTSAIATTGI, SHSTASFTSSITSTETISHS, FTSSITTTESTSQSTPSFTFSTTSTETTSHS, SYTSSITTTETPSHSSPSFPSTITSTETISHRTP, TETI…TTST, TGTSSHSTLGLSSSVTTTKTTSH, TEITSHSPPSFTSSSTTTETPSHSTPGFSSSIATSK, SHST…PPIF, TTESTSHSNPSLTSAITTTETRSHSPP, AETT…TTGI, FTSSITTTESTSQSTPSFTFSTTSTE, TSSITTTETPSHSSPSFPSSITSTETISHRTP, SHSTPSFTSSITTTKSTSHSNPSL, TTET…PPSF, TTSHGTPSLTSLIATTKSTPQNPSSFT, TSSITTTETTSHSTPRITSSITTTEKTSHSTP, TTTESTSHSNPSLTSAITNTETRSHS, TTSH…SKTI, SDSTPSFTSSVTTTETTSQSSPSF, ITTT…TVPS, ITTE…SPLS, TSSIATSETPSHSTPSFPSSITTTQSISHSTPSLSSA, TTKTTSHSPPSFTASITSTK, SHSSPSFTSSSTTTEIPSHSTPGFSSSIATSKTTSTS, TTSFPSSITTTETTSHSTPSF, TTTE…QRSP, TTET…SPSS, SHSTPSFTSSITSPETISHSTP, TGTE…SPSH, STTATPPDSTPSFTSSIATTENTSHSTPSFTSSITTT, TTET…PGFS, TKTTSHSTPDFTSSIASTKTTSHSTP, SIAT…HSPP, TSSFTSSITTTETTSQSTPSFTSSIAVTETPSDSTPV, PSYTSSIITTKTPSHSTPSFPSSITTTETISHSTP, TETT…STPI, TTET…TTET, EMTS…NTPS, FTTAETGVTSTPSSPSSLSTDIPT, SSPSIQSTETSSLVGTTSPT, IPSTHSSTLQTTPSIPSLQTS, TSSMTPESESSIIPNASSSTGTGTVPT, and SLPTILRTSSKSTHPSPPTARTSETSVATTQTPTT. Composition is skewed to low complexity over residues 513-538 and 547-559; these read SMTTTASGPTTTNTLSSLTSSILSST and TSHTTTTTPPSTL. Positions 1620-1638 are enriched in low complexity; the sequence is TSTPPITSSVTPTNTVTSM. Residues 1944 to 1956 are compositionally biased toward polar residues; sequence TTSATMEPPSSSV. Residues 1957-1968 are compositionally biased toward low complexity; the sequence is AATDTGQTTFTS. The segment covering 2066–2091 has biased composition (polar residues); sequence NASSMTTSETTYPNSPTGPVTNSMSK. Low complexity predominate over residues 2096-2107; that stretch reads ASMTQTSSTATS. The segment covering 2113 to 2123 has biased composition (polar residues); it reads PSGSTTEIAKS. A compositionally biased stretch (low complexity) spans 2170–2185; that stretch reads STSMTPSTVSTSIPTS. Positions 2186–2195 are enriched in polar residues; that stretch reads QPKTVNSSSG. Low complexity-rich tracts occupy residues 2292–2308 and 2442–2458; these read SSPPATTSTLHTTAEST and RSTPTSETTYPTSPTST. The span at 2591 to 2603 shows a compositional bias: low complexity; sequence SAMSTSDIPSSPS. 2 stretches are compositionally biased toward low complexity: residues 2929–2944 and 3074–3097; these read STDIPTSQPTTITPSS and ETPSSTVATTGTGQTTFTSSTATS. Residues 3098 to 3109 show a composition bias toward polar residues; it reads PETNTLTPTPDI. Residues 3309-3359 show a composition bias toward low complexity; sequence TTSHSTPSFTSPIATTKTSSHSSPSFTSSIATLETTSHSTPSFTSSITTNS. Positions 3360-3370 are enriched in polar residues; that stretch reads HSTPRFSSSIA. A compositionally biased stretch (low complexity) spans 3371-3385; the sequence is TRETTSHSTSSFTPS. Positions 3386–3395 are enriched in polar residues; it reads IATTKTNSNS. Low complexity predominate over residues 3420 to 3452; the sequence is ITTTETTSHSTPSFTSSMATTKTTSHSTPSFTS. The segment covering 3453 to 3462 has biased composition (polar residues); it reads PIATRETTSH. Residues 3463–3481 show a composition bias toward low complexity; it reads STPSFTSLITTTKTTSHST. A compositionally biased stretch (polar residues) spans 3740 to 3749; the sequence is ITTIETPSHG. Over residues 3750 to 3785 the composition is skewed to low complexity; it reads TPSFTSSITSTETTSHSSPSFISSITTTEITSHSTP. A compositionally biased stretch (polar residues) spans 3786-3812; that stretch reads RFTSSITTMETPSHSTPNFTSSITTAE. 2 stretches are compositionally biased toward low complexity: residues 4020–4042 and 4067–4096; these read STPSYTSAITTTETTSHRTPSFT and TSNSTASLTSSMTTTETTSHSTPSLTSSMT. The span at 4097-4106 shows a compositional bias: polar residues; it reads ATETTSHSTP. 2 stretches are compositionally biased toward low complexity: residues 4182–4228 and 4237–4249; these read TTET…PSFT and TSHSTPSFTSSIT. Residues 4557–4574 show a composition bias toward low complexity; the sequence is TETTSNSSPSFTSSITNT. Residues 4575–4601 are compositionally biased toward polar residues; the sequence is KTTSYSPPGFTSSIPATETTSRSPPGF. A compositionally biased stretch (low complexity) spans 4602–4617; it reads TSSITTTETTSHSTSS. Positions 4802-4827 are enriched in low complexity; that stretch reads TSSFTSSITSTETTSHSTPSLTSSIT. Over residues 5137 to 5158 the composition is skewed to low complexity; that stretch reads TPSHITPSFTSTITTSESTSHS. A compositionally biased stretch (polar residues) spans 5159–5170; it reads NPSLTSAITTTE. 2 stretches are compositionally biased toward low complexity: residues 5174–5203 and 5458–5486; these read HSPPIFTSSITTTETTSHNTPSFTSSITTT and TESTSRSTPSFTFSTTSTETTSHSTPSFT. Positions 5834–5858 are enriched in low complexity; that stretch reads TTSYSTPSITSSITTTERTSHSTPS. Positions 5859-5874 are enriched in polar residues; it reads YTSSIATRETPSHTVP. Residues 5875–5889 show a composition bias toward low complexity; sequence SFTSSITTTESTSHS. Positions 5890-5901 are enriched in polar residues; it reads NPSLTSAITTTE. Residues 6045–6059 are compositionally biased toward low complexity; the sequence is SFTSSITTTDSTSHS. A compositionally biased stretch (polar residues) spans 6060 to 6071; sequence NPSLTSAITTTE. Positions 6172–6185 are enriched in low complexity; it reads TESTSHSTPSFTSS. Polar residues predominate over residues 6186–6197; that stretch reads IATTETTSHTPP. Low complexity predominate over residues 6456–6475; that stretch reads TETPSHSTPSFPSSITTTQS. Residues 6852-6867 are compositionally biased toward polar residues; the sequence is HNTLGLSSSVDTTKTT. A compositionally biased stretch (low complexity) spans 6946-6965; sequence ITTTETTSHSTPSITSSVTT. Positions 6999–7018 are enriched in polar residues; it reads TTESTSHSNPSLTSAITTTE. Positions 7172–7206 are enriched in low complexity; that stretch reads TASHSNPSSTSSITTTESTSHSPPRSTSAIATTGI. 2 stretches are compositionally biased toward low complexity: residues 7300–7329 and 7400–7427; these read TSSITTTESTSQSTPSFTFSTTSTETTSHS and SYTSSITTTETPSHSSPSFPSTITSTET. The span at 7476 to 7491 shows a compositional bias: polar residues; sequence TETISHSPPSFTSLTN. Residues 7492 to 7532 show a composition bias toward low complexity; it reads STETTSHSPPSFTSSSTTTETPSHSTPGFSSSIATSKTTST. Low complexity-rich tracts occupy residues 7734–7766 and 7922–7944; these read TSHSPPSFTSSSTTTETPSHSTPGFSSSIATSK and SHSTRSITSSITTTKRTSHSTPS. The segment covering 7945–7987 has biased composition (polar residues); the sequence is YTSSIATSETPSHTVPSFTSLITTTDSTSHSNPSLTSAITTTE. Residues 8088-8101 are compositionally biased toward low complexity; the sequence is TESTSHSTPSFTSS. Polar residues predominate over residues 8102–8113; it reads IATTETTSHTPP. Residues 8372–8391 are compositionally biased toward low complexity; it reads TETPSHSTPSFPSSITTTQS. A compositionally biased stretch (polar residues) spans 8768 to 8783; that stretch reads HNTLGLSSSVDTTKTT. Over residues 8862–8881 the composition is skewed to low complexity; it reads ITTTETTSHSTPSITSSVTT. Polar residues predominate over residues 8915–8934; the sequence is TTESTSHSNPSLTSAITTTE. 2 stretches are compositionally biased toward low complexity: residues 9067–9081 and 9088–9122; these read PTTETTSHSPPSFTS and TASHSNPSSTSSITTTESTSHSPPRSTSAIATTGI. Residues 9335-9360 show a composition bias toward low complexity; the sequence is TSSITTTETPSHSSPSFPSSITSTET. Residues 9409–9424 are compositionally biased toward polar residues; the sequence is TETISHSPPSFTSLTN. 3 stretches are compositionally biased toward low complexity: residues 9425-9465, 9566-9585, and 9612-9624; these read STET…TTST, SHSTPSFTSSITTTKSTSHS, and TTETTSHRTPSFT. Residues 9625-9661 are compositionally biased toward polar residues; the sequence is SSIATAETTSHSPPSFTSLITTSETPSHSNPSFTSLI. Residues 9662–9674 show a composition bias toward low complexity; sequence TTTESTSHSPPSF. 2 stretches are compositionally biased toward polar residues: residues 9892 to 9903 and 9921 to 9933; these read NPSLTSAITNTE and TTSHSPPSFTSLI. Residues 9934-9973 are compositionally biased toward low complexity; that stretch reads TSTETTSHSPPSFTSSSTTTETPSHSTPGFSSSIATSKTI. The span at 10120 to 10130 shows a compositional bias: low complexity; that stretch reads ITTTETTSHST. Over residues 10131-10166 the composition is skewed to polar residues; sequence PNITSSVTTTERTSHSTPSYTSSIATGETPSHTVPS. Composition is skewed to low complexity over residues 10196–10271 and 10394–10421; these read HSPP…SFTS and TSETPSHSTPSFPSSITTTQSISHSTPS. Residues 10750 to 10791 are compositionally biased toward polar residues; that stretch reads TTTETTSHSPPRFTSSITTTKTPSDSTPVFTPSIATSETSSH. Composition is skewed to low complexity over residues 10792–10828, 10887–10937, and 10950–11032; these read STPGYTSSTATTETMSHSTSSFTSSITTTETTSQRSP, TTET…SSIT, and PSSI…SPSS. Residues 11278 to 11291 are compositionally biased toward low complexity; it reads TETTSHSPPHFTSS. The segment covering 11292–11317 has biased composition (polar residues); that stretch reads ITRTKTTSHRPPTFTSSITTTESPSH. The segment covering 11566–11682 has biased composition (low complexity); sequence TTETTSHSIP…SHSTSGFTSS (117 aa). Polar residues-rich tracts occupy residues 11683–11697 and 11754–11769; these read NATTETTSHSTPGFS and TKTTSHSTPDFTSSIA. Low complexity-rich tracts occupy residues 11770–11779 and 11818–11880; these read STKTTSHSTP and SIAT…SHST. Polar residues-rich tracts occupy residues 11881–11896 and 11903–11912; these read PSFTSSIATIETTSHS and LIPTTKTTLH. 2 stretches are compositionally biased toward low complexity: residues 11913–11949 and 12067–12091; these read SPPSFTSSITTTKTTSHSTSSLTSSMPTTKTTSHSPP and TSSFTSSITTTETTSQSTPSFTSSI. The segment covering 12092 to 12103 has biased composition (polar residues); sequence AVTETPSDSTPV. The segment covering 12280–12309 has biased composition (low complexity); that stretch reads TETTSHSAPNFSSSITSTETTSHSTPSFTS. Positions 12310–12323 are enriched in polar residues; the sequence is AITSTETTSHSTPI. Positions 12364–12412 are enriched in low complexity; the sequence is TTETTSHSTPGFASSITTTKTTSHSTPSFTSSIATSNTTSSSTPGFTSS. Residues 12413-12439 show a composition bias toward polar residues; sequence IATTETTSRSTPGFTSSIVTTETTSPH. A compositionally biased stretch (low complexity) spans 12440–12452; the sequence is TPGFTSSITTTET. Over residues 12468–12477 the composition is skewed to polar residues; the sequence is EMTSHSTPSL. Composition is skewed to low complexity over residues 12478 to 12569, 12624 to 12639, 12681 to 12692, 12794 to 12805, 12990 to 13003, and 13073 to 13086; these read TFSI…VTTP, TSTPSSPSSLSTDIPT, SSPSIQSTETSS, QTTPSIPSLQTS, PESESSIIPNASSS, and TSETSVATTQTPTT. The 34-residue stretch at 13130–13163 folds into the EGF-like domain; the sequence is SGDRCQLQTRCQNGGQWDGLKCQCPSTFYGSSCE. 2 disulfide bridges follow: C13134-C13140 and C13153-C13162. One can recognise an SEA domain in the interval 13172–13297; the sequence is DVVETEVGME…DSIKVNNNSK (126 aa). Residues 13381–13401 form a helical membrane-spanning segment; sequence LVGGLTAGAALLVLLLLALGV.

In terms of processing, highly O-glycosylated and probably also N-glycosylated. As to expression, fetal and adult small intestine and fetal and adult colon.

It localises to the membrane. Functionally, major glycoprotein component of a variety of mucus gels. Thought to provide a protective, lubricating barrier against particles and infectious agents at mucosal surfaces. The polypeptide is Mucin-3B (Homo sapiens (Human)).